The sequence spans 43 residues: Protein PsbN (43 aa).

A helical transmembrane segment spans residues 5-27 (TLVAISISGSLVSFTGYALYTAF).

Belongs to the PsbN family.

The protein resides in the plastid. Its subcellular location is the chloroplast thylakoid membrane. In terms of biological role, may play a role in photosystem I and II biogenesis. The polypeptide is Protein PsbN (Lactoris fernandeziana).